Reading from the N-terminus, the 437-residue chain is GTPase Obg (437 aa).

The region spanning serine 2–leucine 160 is the Obg domain. In terms of domain architecture, OBG-type G spans alanine 161–alanine 338. GTP-binding positions include glycine 167 to serine 174, phenylalanine 192 to valine 196, aspartate 214 to glycine 217, asparagine 284 to aspartate 287, and serine 319 to leucine 321. 2 residues coordinate Mg(2+): serine 174 and threonine 194. The OCT domain maps to glycine 359–aspartate 437.

It belongs to the TRAFAC class OBG-HflX-like GTPase superfamily. OBG GTPase family. As to quaternary structure, monomer. Requires Mg(2+) as cofactor.

Its subcellular location is the cytoplasm. In terms of biological role, an essential GTPase which binds GTP, GDP and possibly (p)ppGpp with moderate affinity, with high nucleotide exchange rates and a fairly low GTP hydrolysis rate. Plays a role in control of the cell cycle, stress response, ribosome biogenesis and in those bacteria that undergo differentiation, in morphogenesis control. The sequence is that of GTPase Obg from Streptococcus equi subsp. equi (strain 4047).